The primary structure comprises 274 residues: DegV domain-containing protein Cgl2349/cg2579 (274 aa).

The 257-residue stretch at 3 to 259 folds into the DegV domain; that stretch reads VRVIVDSSAC…PGAVSVSAVF (257 aa). Residues T39 and S73 each contribute to the hexadecanoate site.

As to quaternary structure, monomer.

In terms of biological role, binds long-chain fatty acids, such as palmitate, and may play a role in lipid transport or fatty acid metabolism. This chain is DegV domain-containing protein Cgl2349/cg2579, found in Corynebacterium glutamicum (strain ATCC 13032 / DSM 20300 / JCM 1318 / BCRC 11384 / CCUG 27702 / LMG 3730 / NBRC 12168 / NCIMB 10025 / NRRL B-2784 / 534).